A 239-amino-acid chain; its full sequence is Purine nucleoside phosphorylase DeoD-type (239 aa).

His5 contacts a purine D-ribonucleoside. Phosphate contacts are provided by residues Gly21, Arg25, Arg44, and 88–91 (RVGS). A purine D-ribonucleoside is bound by residues 180-182 (EME) and 204-205 (SD). Asp205 acts as the Proton donor in catalysis.

This sequence belongs to the PNP/UDP phosphorylase family. Homohexamer; trimer of homodimers.

It carries out the reaction a purine D-ribonucleoside + phosphate = a purine nucleobase + alpha-D-ribose 1-phosphate. The catalysed reaction is a purine 2'-deoxy-D-ribonucleoside + phosphate = a purine nucleobase + 2-deoxy-alpha-D-ribose 1-phosphate. In terms of biological role, catalyzes the reversible phosphorolytic breakdown of the N-glycosidic bond in the beta-(deoxy)ribonucleoside molecules, with the formation of the corresponding free purine bases and pentose-1-phosphate. The sequence is that of Purine nucleoside phosphorylase DeoD-type from Erwinia tasmaniensis (strain DSM 17950 / CFBP 7177 / CIP 109463 / NCPPB 4357 / Et1/99).